The chain runs to 254 residues: Glucosamine-6-phosphate deaminase (254 aa).

The active-site Proton acceptor; for enolization step is Asp67. Asn136 acts as the For ring-opening step in catalysis. His138 serves as the catalytic Proton acceptor; for ring-opening step. The active-site For ring-opening step is the Glu143.

It belongs to the glucosamine/galactosamine-6-phosphate isomerase family. NagB subfamily.

The enzyme catalyses alpha-D-glucosamine 6-phosphate + H2O = beta-D-fructose 6-phosphate + NH4(+). It participates in amino-sugar metabolism; N-acetylneuraminate degradation; D-fructose 6-phosphate from N-acetylneuraminate: step 5/5. Its function is as follows. Catalyzes the reversible isomerization-deamination of glucosamine 6-phosphate (GlcN6P) to form fructose 6-phosphate (Fru6P) and ammonium ion. The sequence is that of Glucosamine-6-phosphate deaminase from Brevibacillus brevis (strain 47 / JCM 6285 / NBRC 100599).